A 399-amino-acid polypeptide reads, in one-letter code: Trimethyllysine dioxygenase (399 aa).

Residues His214, Asp216, and His360 each contribute to the Fe cation site.

Belongs to the gamma-BBH/TMLD family. Requires Fe(2+) as cofactor. L-ascorbate serves as cofactor.

The protein localises to the cytoplasm. It carries out the reaction N(6),N(6),N(6)-trimethyl-L-lysine + 2-oxoglutarate + O2 = (3S)-3-hydroxy-N(6),N(6),N(6)-trimethyl-L-lysine + succinate + CO2. It participates in amine and polyamine biosynthesis; carnitine biosynthesis. Converts trimethyllysine (TML) into hydroxytrimethyllysine (HTML). The polypeptide is Trimethyllysine dioxygenase (Meyerozyma guilliermondii (strain ATCC 6260 / CBS 566 / DSM 6381 / JCM 1539 / NBRC 10279 / NRRL Y-324) (Yeast)).